The chain runs to 305 residues: UDP-3-O-acyl-N-acetylglucosamine deacetylase (305 aa).

Zn(2+) is bound by residues His-78, His-237, and Asp-241. His-264 (proton donor) is an active-site residue.

Belongs to the LpxC family. It depends on Zn(2+) as a cofactor.

It catalyses the reaction a UDP-3-O-[(3R)-3-hydroxyacyl]-N-acetyl-alpha-D-glucosamine + H2O = a UDP-3-O-[(3R)-3-hydroxyacyl]-alpha-D-glucosamine + acetate. It participates in glycolipid biosynthesis; lipid IV(A) biosynthesis; lipid IV(A) from (3R)-3-hydroxytetradecanoyl-[acyl-carrier-protein] and UDP-N-acetyl-alpha-D-glucosamine: step 2/6. Catalyzes the hydrolysis of UDP-3-O-myristoyl-N-acetylglucosamine to form UDP-3-O-myristoylglucosamine and acetate, the committed step in lipid A biosynthesis. This Burkholderia thailandensis (strain ATCC 700388 / DSM 13276 / CCUG 48851 / CIP 106301 / E264) protein is UDP-3-O-acyl-N-acetylglucosamine deacetylase.